The following is a 238-amino-acid chain: MSAGREQFVRRMRASRSAGDAFDVVLQRGTELGFQFCAYRLTAPIPITRRRTFVWSNYPNACAASPVLDADRSGRGADTDAQACGVTADATQVFESMADGLWAETSDQGVRYGWALSVRDRWGAVGTLKFARGTREIVQEELDDIEPEMIWLAHLAHDTIGSLMRDETIPGEIARVSLVERQILLWTAEGKTVSEISSILQMSVRNINFHIQNVVGKLGATNKTHAAVKATLVGLIPV.

One can recognise an HTH luxR-type domain in the interval 169-234 (IPGEIARVSL…HAAVKATLVG (66 aa)). A DNA-binding region (H-T-H motif) is located at residues 193-212 (VSEISSILQMSVRNINFHIQ).

Belongs to the autoinducer-regulated transcriptional regulatory protein family.

Functionally, represses thailandamide production. The sequence is that of Transcriptional repressor ThaA from Burkholderia thailandensis (strain ATCC 700388 / DSM 13276 / CCUG 48851 / CIP 106301 / E264).